The following is a 413-amino-acid chain: Protein cycle (413 aa).

The segment at 1–43 is disordered; that stretch reads MEVQEFCENMEEIEDENYDEEKSARTSDENRKQNHSEIEKRRR. A compositionally biased stretch (acidic residues) spans 8 to 19; that stretch reads ENMEEIEDENYD. Basic and acidic residues predominate over residues 20-41; the sequence is EEKSARTSDENRKQNHSEIEKR. Residues 30–83 form the bHLH domain; it reads NRKQNHSEIEKRRRDKMNTYINELSSMIPMCFAMQRKLDKLTVLRMAVQHLRGI. A PAS 1 domain is found at 104 to 175; sequence DQELKMIILQ…EQLSSLEQCP (72 aa). Residues 219–242 form a disordered region; that stretch reads NQIKEESDTSSSSRSSTKRKSRLT. The PAS 2 domain maps to 297 to 367; sequence PASLDNHPNI…ESHKMVMQVP (71 aa). The 42-residue stretch at 372–413 folds into the PAC domain; it reads TQVYRFRCKDNSYIQLQSEWRAFKNPWTSEIDYIIAKNSVFL.

As to quaternary structure, efficient DNA binding requires dimerization with another bHLH protein. Forms a heterodimer with Clock in order to activate PER and TIM transcription. Expressed in head and ovary.

It localises to the nucleus. Putative transcription factor involved in the generation of biological rhythms. Activates cycling transcription of Period (PER) and Timeless (TIM) by binding to the E-box (5'-CACGTG-3') present in their promoters. In Drosophila melanogaster (Fruit fly), this protein is Protein cycle (cyc).